A 142-amino-acid polypeptide reads, in one-letter code: Ribosome-binding factor A (142 aa).

The segment at 119–142 is disordered; sequence EAKQKQHGVETDAEQGDTKEEGDK.

It belongs to the RbfA family. Monomer. Binds 30S ribosomal subunits, but not 50S ribosomal subunits or 70S ribosomes.

The protein resides in the cytoplasm. Functionally, one of several proteins that assist in the late maturation steps of the functional core of the 30S ribosomal subunit. Associates with free 30S ribosomal subunits (but not with 30S subunits that are part of 70S ribosomes or polysomes). Required for efficient processing of 16S rRNA. May interact with the 5'-terminal helix region of 16S rRNA. The polypeptide is Ribosome-binding factor A (Shewanella pealeana (strain ATCC 700345 / ANG-SQ1)).